A 393-amino-acid chain; its full sequence is Probable protein phosphatase 2C 68 (393 aa).

Positions 56–359 (DFSIAVVQAN…DDITVVVIFI (304 aa)) constitute a PPM-type phosphatase domain. The Mn(2+) site is built by Asp87, Gly88, Asp291, and Asp350.

It belongs to the PP2C family. The cofactor is Mg(2+). Mn(2+) is required as a cofactor.

The catalysed reaction is O-phospho-L-seryl-[protein] + H2O = L-seryl-[protein] + phosphate. It catalyses the reaction O-phospho-L-threonyl-[protein] + H2O = L-threonyl-[protein] + phosphate. In terms of biological role, may dephosphorylate and repress plasma membrane H(+)-ATPases (PM H(+)-ATPases, e.g. AHA1 and AHA2), thus influencing negatively plant growth and fitness. The polypeptide is Probable protein phosphatase 2C 68 (Arabidopsis thaliana (Mouse-ear cress)).